Here is a 326-residue protein sequence, read N- to C-terminus: Glycerol-3-phosphate dehydrogenase [NAD(P)+] (326 aa).

Residues W16, R36, R37, and K106 each contribute to the NADPH site. The sn-glycerol 3-phosphate site is built by K106 and G132. A136 provides a ligand contact to NADPH. K187, D240, S250, R251, and N252 together coordinate sn-glycerol 3-phosphate. Catalysis depends on K187, which acts as the Proton acceptor. R251 contacts NADPH. NADPH is bound by residues V271 and E273.

This sequence belongs to the NAD-dependent glycerol-3-phosphate dehydrogenase family.

Its subcellular location is the cytoplasm. The enzyme catalyses sn-glycerol 3-phosphate + NAD(+) = dihydroxyacetone phosphate + NADH + H(+). It carries out the reaction sn-glycerol 3-phosphate + NADP(+) = dihydroxyacetone phosphate + NADPH + H(+). It participates in membrane lipid metabolism; glycerophospholipid metabolism. Its function is as follows. Catalyzes the reduction of the glycolytic intermediate dihydroxyacetone phosphate (DHAP) to sn-glycerol 3-phosphate (G3P), the key precursor for phospholipid synthesis. This chain is Glycerol-3-phosphate dehydrogenase [NAD(P)+], found in Deinococcus geothermalis (strain DSM 11300 / CIP 105573 / AG-3a).